We begin with the raw amino-acid sequence, 448 residues long: tRNA modification GTPase MnmE (448 aa).

3 residues coordinate (6S)-5-formyl-5,6,7,8-tetrahydrofolate: arginine 24, glutamate 81, and lysine 120. Positions 216–373 (GLNVVLVGAP…LKRTLLREAG (158 aa)) constitute a TrmE-type G domain. Asparagine 226 is a binding site for K(+). Residues 226-231 (NVGKSS), 245-251 (TDIAGTT), and 270-273 (DTAG) each bind GTP. Serine 230 serves as a coordination point for Mg(2+). Residues threonine 245, isoleucine 247, and threonine 250 each contribute to the K(+) site. A Mg(2+)-binding site is contributed by threonine 251. Lysine 448 is a (6S)-5-formyl-5,6,7,8-tetrahydrofolate binding site.

This sequence belongs to the TRAFAC class TrmE-Era-EngA-EngB-Septin-like GTPase superfamily. TrmE GTPase family. As to quaternary structure, homodimer. Heterotetramer of two MnmE and two MnmG subunits. K(+) is required as a cofactor.

The protein localises to the cytoplasm. Its function is as follows. Exhibits a very high intrinsic GTPase hydrolysis rate. Involved in the addition of a carboxymethylaminomethyl (cmnm) group at the wobble position (U34) of certain tRNAs, forming tRNA-cmnm(5)s(2)U34. In Neisseria meningitidis serogroup A / serotype 4A (strain DSM 15465 / Z2491), this protein is tRNA modification GTPase MnmE.